Reading from the N-terminus, the 142-residue chain is Large ribosomal subunit protein uL13 (142 aa).

It belongs to the universal ribosomal protein uL13 family. In terms of assembly, part of the 50S ribosomal subunit.

This protein is one of the early assembly proteins of the 50S ribosomal subunit, although it is not seen to bind rRNA by itself. It is important during the early stages of 50S assembly. In Maridesulfovibrio salexigens (strain ATCC 14822 / DSM 2638 / NCIMB 8403 / VKM B-1763) (Desulfovibrio salexigens), this protein is Large ribosomal subunit protein uL13.